The following is a 99-amino-acid chain: MMNMQSMMKQAQKLQKQMEKGQAELAATEFTGKSAQDLVVAKLTGDKKVVSIDFNPAVVDPEDLETLSEMTAQALNHALAQIDDATQKKMGAFAGKLPF.

Low complexity predominate over residues 1-15 (MMNMQSMMKQAQKLQ). Residues 1–23 (MMNMQSMMKQAQKLQKQMEKGQA) are disordered.

It belongs to the YbaB/EbfC family. In terms of assembly, homodimer.

The protein resides in the cytoplasm. The protein localises to the nucleoid. Functionally, binds to DNA and alters its conformation. May be involved in regulation of gene expression, nucleoid organization and DNA protection. The protein is Nucleoid-associated protein SSA_0326 of Streptococcus sanguinis (strain SK36).